The sequence spans 282 residues: Inositol oxygenase (282 aa).

A disordered region spans residues 1–25 (MKDPDPSQVYRPDMDPEAAKDKGSF). The span at 12-24 (PDMDPEAAKDKGS) shows a compositional bias: basic and acidic residues. Arg26 serves as a coordination point for substrate. Ser30 carries the post-translational modification Phosphoserine. 82 to 84 (DES) contacts substrate. Fe cation contacts are provided by His95, His120, and Asp121. Substrate contacts are provided by residues Lys124 and 138-139 (GD). Positions 191, 217, and 250 each coordinate Fe cation. 217-218 (HS) is a substrate binding site.

The protein belongs to the myo-inositol oxygenase family. Fe cation serves as cofactor. The N-terminus is blocked. As to expression, kidney specific.

It localises to the cytoplasm. The catalysed reaction is myo-inositol + O2 = D-glucuronate + H2O + H(+). It functions in the pathway polyol metabolism; myo-inositol degradation into D-glucuronate; D-glucuronate from myo-inositol: step 1/1. The chain is Inositol oxygenase (MIOX) from Sus scrofa (Pig).